We begin with the raw amino-acid sequence, 182 residues long: MLQALLIFVLQIIYVPILTIRTILLVKNQTRSAAGVGLLEGAIYIVSLGIVFQDLSNWMNIVAYVIGFSAGLLLGGYIENKLAIGYITYQVSLLDRCNELVDELRHSGFGVTVFEGEGINSIRYRLDIVAKRSREKELLEIINEIAPKAFMSSYEIRSFKGGYLTKAMKKRALMKKKDEHAS.

The next 3 membrane-spanning stretches (helical) occupy residues 6 to 26 (LIFV…ILLV), 32 to 52 (SAAG…GIVF), and 58 to 78 (WMNI…GGYI).

Belongs to the UPF0316 family.

The protein localises to the cell membrane. This is UPF0316 protein BCB4264_A3368 from Bacillus cereus (strain B4264).